The chain runs to 1560 residues: Lysine-specific demethylase 5C (1560 aa).

The JmjN domain maps to 14–55 (CPVFEPSWAEFRDPLGYIAKIRPIAEKSGICKIRPPADWQPP). The ARID domain occupies 79 to 169 (TRVKLNYLDQ…IVYPYEMYQS (91 aa)). Residues 197 to 207 (LRQSVQPSKFN) are compositionally biased toward polar residues. A disordered region spans residues 197–227 (LRQSVQPSKFNSYGRRAKRLQPDPEPTEEDI). Glycyl lysine isopeptide (Lys-Gly) (interchain with G-Cter in SUMO2) cross-links involve residues Lys-205, Lys-229, Lys-244, and Lys-274. Ser-287 is modified (phosphoserine). A Glycyl lysine isopeptide (Lys-Gly) (interchain with G-Cter in SUMO2) cross-link involves residue Lys-295. A phosphoserine mark is found at Ser-301 and Ser-317. The PHD-type 1 zinc-finger motif lies at 326-372 (VCRMCSRGDEDDKLLLCDGCDDNYHIFCLLPPLPEIPKGVWRCPKCV). Residue Tyr-440 participates in 2-oxoglutarate binding. A JmjC domain is found at 468–634 (EYATSGWNLN…AGRQCIEHYR (167 aa)). Fe cation-binding residues include His-514 and Glu-516. 2-oxoglutarate is bound by residues Ser-522, Asn-524, and Lys-532. His-602 provides a ligand contact to Fe cation. The segment at 707–759 (CIKCKTTCFLSALACYDCPDGLVCLSHINDLCKCSSSRQYLRYRYTLDELPAM) adopts a C5HC2 zinc-finger fold. A phosphoserine mark is found at Ser-893 and Ser-897. Residue Lys-1127 forms a Glycyl lysine isopeptide (Lys-Gly) (interchain with G-Cter in SUMO2) linkage. The disordered stretch occupies residues 1161–1181 (ILQLRRTNSAKPSPLASSSTA). The segment covering 1169 to 1181 (SAKPSPLASSSTA) has biased composition (low complexity). Residues 1187-1248 (ICVCGQVLAG…DTKFLCPLCM (62 aa)) form a PHD-type 2 zinc finger. 2 disordered regions span residues 1316–1371 (QAEP…GSGK) and 1444–1560 (ERHG…QQQL). Basic and acidic residues predominate over residues 1335 to 1345 (PLREGSGKDMP). Residue Ser-1359 is modified to Phosphoserine. A compositionally biased stretch (basic residues) spans 1448 to 1463 (SRARGRALERRRRRKV). Positions 1464–1481 (DRGGEGDDPAREELEPKR) are enriched in basic and acidic residues. The span at 1488 to 1503 (EAEEVQEEEELEEETG) shows a compositional bias: acidic residues. Residues 1516–1544 (SPSTQENQNGLEPAEGTTSGPSAPFSTLT) show a composition bias toward polar residues.

This sequence belongs to the JARID1 histone demethylase family. As to quaternary structure, part of two distinct complexes, one containing E2F6, and the other containing REST. Interacts with ZMYND8. Requires Fe(2+) as cofactor. Expressed in all tissues examined. Highest levels found in brain and skeletal muscle.

It localises to the nucleus. The enzyme catalyses N(6),N(6),N(6)-trimethyl-L-lysyl(4)-[histone H3] + 3 2-oxoglutarate + 3 O2 = L-lysyl(4)-[histone H3] + 3 formaldehyde + 3 succinate + 3 CO2. With respect to regulation, the inhibitor KDOAM-25 and others inhibit its demethylase activity, resulting to cell cycle arrest in myeloma cells. Histone demethylase that specifically demethylates 'Lys-4' of histone H3, thereby playing a central role in histone code. Does not demethylate histone H3 'Lys-9', H3 'Lys-27', H3 'Lys-36', H3 'Lys-79' or H4 'Lys-20'. Demethylates trimethylated and dimethylated but not monomethylated H3 'Lys-4'. Participates in transcriptional repression of neuronal genes by recruiting histone deacetylases and REST at neuron-restrictive silencer elements. Represses the CLOCK-BMAL1 heterodimer-mediated transcriptional activation of the core clock component PER2. This Homo sapiens (Human) protein is Lysine-specific demethylase 5C.